The primary structure comprises 191 residues: UPF0312 protein Sbal_3041 (191 aa).

Residues 1 to 22 (MKKQLLSALIGASLLAPMAASA) form the signal peptide.

This sequence belongs to the UPF0312 family. Type 1 subfamily.

It localises to the periplasm. The chain is UPF0312 protein Sbal_3041 from Shewanella baltica (strain OS155 / ATCC BAA-1091).